Reading from the N-terminus, the 173-residue chain is NADH-ubiquinone oxidoreductase chain 6 (173 aa).

Transmembrane regions (helical) follow at residues 1–21, 25–45, 53–73, 82–102, and 142–162; these read MTYV…AVAS, PYFG…VLIW, LVLF…SAAL, LGSW…FGIL, and GVLL…LELV.

This sequence belongs to the complex I subunit 6 family.

It localises to the mitochondrion membrane. It carries out the reaction a ubiquinone + NADH + 5 H(+)(in) = a ubiquinol + NAD(+) + 4 H(+)(out). In terms of biological role, core subunit of the mitochondrial membrane respiratory chain NADH dehydrogenase (Complex I) that is believed to belong to the minimal assembly required for catalysis. Complex I functions in the transfer of electrons from NADH to the respiratory chain. The immediate electron acceptor for the enzyme is believed to be ubiquinone. The protein is NADH-ubiquinone oxidoreductase chain 6 (MT-ND6) of Tetraodon nigroviridis (Spotted green pufferfish).